We begin with the raw amino-acid sequence, 345 residues long: Uroporphyrinogen decarboxylase (345 aa).

Residues 27–31 (RQAGR), phenylalanine 46, aspartate 76, tyrosine 152, serine 207, and histidine 320 contribute to the substrate site.

This sequence belongs to the uroporphyrinogen decarboxylase family. As to quaternary structure, homodimer.

Its subcellular location is the cytoplasm. It catalyses the reaction uroporphyrinogen III + 4 H(+) = coproporphyrinogen III + 4 CO2. Its pathway is porphyrin-containing compound metabolism; protoporphyrin-IX biosynthesis; coproporphyrinogen-III from 5-aminolevulinate: step 4/4. Its function is as follows. Catalyzes the decarboxylation of four acetate groups of uroporphyrinogen-III to yield coproporphyrinogen-III. In Geobacillus kaustophilus (strain HTA426), this protein is Uroporphyrinogen decarboxylase.